A 529-amino-acid polypeptide reads, in one-letter code: Laccase-1 (529 aa).

Positions 1-23 (MFPGARILATLTLALHLLHGTHA) are cleaved as a signal peptide. 3 Plastocyanin-like domains span residues 25-159 (IGPT…FIVY), 170-312 (DVDN…ILRY), and 380-499 (TAPV…FAED). N-linked (GlcNAc...) asparagine glycosylation is present at asparagine 57. Positions 96, 98, 141, and 143 each coordinate Cu cation. 2 disulfide bridges follow: cysteine 117–cysteine 514 and cysteine 149–cysteine 236. Asparagine 239 and asparagine 282 each carry an N-linked (GlcNAc...) asparagine glycan. Residues histidine 425, histidine 428, histidine 430, histidine 481, cysteine 482, histidine 483, and histidine 487 each contribute to the Cu cation site.

The protein belongs to the multicopper oxidase family. It depends on Cu cation as a cofactor.

It is found in the secreted. It carries out the reaction 4 hydroquinone + O2 = 4 benzosemiquinone + 2 H2O. Its function is as follows. Lignin degradation and detoxification of lignin-derived products. The polypeptide is Laccase-1 (POX1) (Pleurotus ostreatus (Oyster mushroom)).